A 270-amino-acid chain; its full sequence is Coiled-coil domain-containing protein 3 (270 aa).

An N-terminal signal peptide occupies residues Met-1–Ala-21. The N-linked (GlcNAc...) asparagine glycan is linked to Asn-100. Residues Ser-188–Ala-251 are a coiled coil.

As to quaternary structure, homodimer. Expressed in umbilical vein endothelial cells (HUVEC), and at lower levels in aortic smooth muscle cells (HASMC).

The protein localises to the secreted. Its function is as follows. Negatively regulates TNF-alpha-induced pro-inflammatory response in endothelial cells (ECs) via inhibition of TNF-alpha-induced NF-kappaB activation in ECs. Positively regulates lipid accumulation in adipose cells. The polypeptide is Coiled-coil domain-containing protein 3 (CCDC3) (Homo sapiens (Human)).